A 299-amino-acid chain; its full sequence is ATP synthase gamma chain (299 aa).

It belongs to the ATPase gamma chain family. As to quaternary structure, F-type ATPases have 2 components, CF(1) - the catalytic core - and CF(0) - the membrane proton channel. CF(1) has five subunits: alpha(3), beta(3), gamma(1), delta(1), epsilon(1). CF(0) has three main subunits: a, b and c.

It localises to the cell membrane. Functionally, produces ATP from ADP in the presence of a proton gradient across the membrane. The gamma chain is believed to be important in regulating ATPase activity and the flow of protons through the CF(0) complex. In Leifsonia xyli subsp. xyli (strain CTCB07), this protein is ATP synthase gamma chain.